Reading from the N-terminus, the 465-residue chain is Adenosine 3'-phospho 5'-phosphosulfate transporter 1 (465 aa).

The next 10 helical transmembrane spans lie at 13 to 33 (LVIC…SDLL), 61 to 81 (FLKL…GFLI), 142 to 162 (AVQL…WGVL), 185 to 205 (QFLV…YLQW), 270 to 290 (SYEY…MSGS), 299 to 319 (VTTL…SFTA), 339 to 359 (GVNL…GGFM), 370 to 390 (KFVF…LFIY), 391 to 407 (HTID…IMTL), and 424 to 444 (ISLL…LRVY).

Belongs to the nucleotide-sugar transporter family. SLC35B subfamily. As to expression, expressed throughout embryogenesis. During oogenesis, it is expressed strongly in the nurse cells of the germline. Maternally expressed at the syncytial blastoderm stage. Zygotically expressed, from after germ-band elongation in the invaginating salivary gland placodes. Remains expressed predominantly in this tissue throughout embryogenesis, but low-level expression may also be present throughout the embryo.

It localises to the golgi apparatus membrane. Mediates the transport of adenosine 3'-phospho 5'-phosphosulfate (PAPS), from cytosol into Golgi. PAPS is a universal sulfuryl donor for sulfation events that take place in the Golgi. Required for the dorsoventral patterning, suggesting that it mediates the transport of the sulfate donor required for the sulfotransferase activity of pip (pipe). The protein is Adenosine 3'-phospho 5'-phosphosulfate transporter 1 (sll) of Drosophila melanogaster (Fruit fly).